The following is a 535-amino-acid chain: Dual specificity calcium/calmodulin-dependent 3',5'-cyclic nucleotide phosphodiesterase 1B (535 aa).

Residues 1-21 are disordered; the sequence is MELSPRSPPEMLESDCPSPLE. A phosphoserine mark is found at Ser-7 and Ser-14. Calmodulin-binding stretches follow at residues 27–47 and 117–140; these read SKKM…QLEN and EKPK…MFRR. The PDEase domain maps to 145-502; the sequence is VGPTYSTAVH…QKWKERAASG (358 aa). Residue His-222 is the Proton donor of the active site. Positions 226, 262, 263, and 369 each coordinate Zn(2+). Asp-263 is a binding site for Mg(2+). Disordered regions lie at residues 445–474 and 495–535; these read PLTD…GDPN and WKER…GNLD. The span at 454–463 shows a compositional bias: polar residues; sequence KSQPSFQWRQ. Phosphoserine is present on residues Ser-465 and Ser-513.

Belongs to the cyclic nucleotide phosphodiesterase family. PDE1 subfamily. In terms of assembly, homodimer. Requires Zn(2+) as cofactor. It depends on Mg(2+) as a cofactor. Expressed in brain.

It localises to the cytoplasm. Its subcellular location is the cytosol. It catalyses the reaction a nucleoside 3',5'-cyclic phosphate + H2O = a nucleoside 5'-phosphate + H(+). It carries out the reaction 3',5'-cyclic GMP + H2O = GMP + H(+). The catalysed reaction is 3',5'-cyclic AMP + H2O = AMP + H(+). Type I PDE are activated by the binding of calmodulin in the presence of Ca(2+). Functionally, cyclic nucleotide phosphodiesterase with a dual specificity for the second messengers cAMP and cGMP, which are key regulators of many important physiological processes. Has a preference for cGMP as a substrate. This chain is Dual specificity calcium/calmodulin-dependent 3',5'-cyclic nucleotide phosphodiesterase 1B, found in Rattus norvegicus (Rat).